Reading from the N-terminus, the 816-residue chain is Probable E3 ubiquitin-protein ligase hulA (816 aa).

Positions 1–112 (MGSNLPAQPN…QMGGDEMLTR (112 aa)) constitute a C2 domain. Disordered regions lie at residues 134-238 (NLST…GWER) and 254-354 (RTTT…YFVD). Positions 160–178 (VPQVAPSSSHPAASGAAPV) are enriched in low complexity. Polar residues predominate over residues 181 to 192 (SASNPSLNPQRV). A compositionally biased stretch (low complexity) spans 193-213 (PSTTRPSSTAAPASAAGAAAS). Composition is skewed to polar residues over residues 214-227 (NTHG…SFED) and 254-267 (RTTT…NYNE). Residues 230–263 (GRLPAGWERREDNLGRTYYVDHNTRTTTWTRPSS) form the WW 1 domain. Over residues 268-295 (HAQRSQREANMQLERRAHQSRMLPEDRT) the composition is skewed to basic and acidic residues. Over residues 296–310 (GANSPNLPESSQQAH) the composition is skewed to polar residues. Residues 325-334 (ATGATTAGTG) show a composition bias toward low complexity. 2 WW domains span residues 334–367 (GELP…DPRR) and 394–427 (GPLP…DPRL). Positions 483–816 (SASDLKKRLM…VEETLGFGQE (334 aa)) constitute an HECT domain. Catalysis depends on cysteine 784, which acts as the Glycyl thioester intermediate.

The protein belongs to the RSP5/NEDD4 family. As to quaternary structure, interacts with creD.

The protein resides in the cytoplasm. The enzyme catalyses S-ubiquitinyl-[E2 ubiquitin-conjugating enzyme]-L-cysteine + [acceptor protein]-L-lysine = [E2 ubiquitin-conjugating enzyme]-L-cysteine + N(6)-ubiquitinyl-[acceptor protein]-L-lysine.. Its pathway is protein modification; protein ubiquitination. In terms of biological role, E3 ubiquitin-protein ligase which accepts ubiquitin from an E2 ubiquitin-conjugating enzyme in the form of a thioester and then directly transfers the ubiquitin to targeted substrates. Probably involved in the regulatory network controlling carbon source utilization. The sequence is that of Probable E3 ubiquitin-protein ligase hulA (hulA) from Neosartorya fischeri (strain ATCC 1020 / DSM 3700 / CBS 544.65 / FGSC A1164 / JCM 1740 / NRRL 181 / WB 181) (Aspergillus fischerianus).